Consider the following 310-residue polypeptide: Malate dehydrogenase (310 aa).

NAD(+) is bound by residues glycine 7–glycine 12 and aspartate 32. Substrate contacts are provided by arginine 81 and arginine 87. NAD(+)-binding positions include asparagine 94 and valine 117–asparagine 119. Asparagine 119 and arginine 150 together coordinate substrate. Catalysis depends on histidine 174, which acts as the Proton acceptor.

The protein belongs to the LDH/MDH superfamily. MDH type 3 family. In terms of assembly, homotetramer; arranged as a dimer of dimers.

It carries out the reaction (S)-malate + NAD(+) = oxaloacetate + NADH + H(+). Catalyzes the reversible oxidation of malate to oxaloacetate. The protein is Malate dehydrogenase of Chlorobaculum parvum (strain DSM 263 / NCIMB 8327) (Chlorobium vibrioforme subsp. thiosulfatophilum).